The chain runs to 554 residues: CTP synthase (554 aa).

The interval 1–279 (MSQPRAEHVT…DAFLIRRLDL (279 aa)) is amidoligase domain. Serine 21 serves as a coordination point for CTP. Serine 21 contributes to the UTP binding site. ATP is bound by residues 22–27 (SLGKGL) and aspartate 79. Aspartate 79 and glutamate 153 together coordinate Mg(2+). Residues 160–162 (DIE), 200–205 (KTKPTQ), and lysine 236 contribute to the CTP site. Residues 200–205 (KTKPTQ) and lysine 236 each bind UTP. Positions 304-551 (TVALVGKYID…VKAGLKHKND (248 aa)) constitute a Glutamine amidotransferase type-1 domain. Residue glycine 367 participates in L-glutamine binding. Cysteine 394 functions as the Nucleophile; for glutamine hydrolysis in the catalytic mechanism. L-glutamine-binding positions include 395-398 (LGLQ), glutamate 417, and arginine 478. Residues histidine 524 and glutamate 526 contribute to the active site.

The protein belongs to the CTP synthase family. Homotetramer.

It catalyses the reaction UTP + L-glutamine + ATP + H2O = CTP + L-glutamate + ADP + phosphate + 2 H(+). The enzyme catalyses L-glutamine + H2O = L-glutamate + NH4(+). It carries out the reaction UTP + NH4(+) + ATP = CTP + ADP + phosphate + 2 H(+). Its pathway is pyrimidine metabolism; CTP biosynthesis via de novo pathway; CTP from UDP: step 2/2. With respect to regulation, allosterically activated by GTP, when glutamine is the substrate; GTP has no effect on the reaction when ammonia is the substrate. The allosteric effector GTP functions by stabilizing the protein conformation that binds the tetrahedral intermediate(s) formed during glutamine hydrolysis. Inhibited by the product CTP, via allosteric rather than competitive inhibition. Catalyzes the ATP-dependent amination of UTP to CTP with either L-glutamine or ammonia as the source of nitrogen. Regulates intracellular CTP levels through interactions with the four ribonucleotide triphosphates. The polypeptide is CTP synthase (Corynebacterium kroppenstedtii (strain DSM 44385 / JCM 11950 / CIP 105744 / CCUG 35717)).